The chain runs to 270 residues: 3-phenylpropionate-dihydrodiol/cinnamic acid-dihydrodiol dehydrogenase (270 aa).

10 to 34 (FITGGGSGLGLALVERFIEEGAQVA) contributes to the NAD(+) binding site. Ser-143 is a binding site for substrate. The active-site Proton acceptor is the Tyr-156.

This sequence belongs to the short-chain dehydrogenases/reductases (SDR) family.

It carries out the reaction 3-(cis-5,6-dihydroxycyclohexa-1,3-dien-1-yl)propanoate + NAD(+) = 3-(2,3-dihydroxyphenyl)propanoate + NADH + H(+). The catalysed reaction is (2E)-3-(cis-5,6-dihydroxycyclohexa-1,3-dien-1-yl)prop-2-enoate + NAD(+) = (2E)-3-(2,3-dihydroxyphenyl)prop-2-enoate + NADH + H(+). Its pathway is aromatic compound metabolism; 3-phenylpropanoate degradation. Functionally, converts 3-phenylpropionate-dihydrodiol (PP-dihydrodiol) and cinnamic acid-dihydrodiol (CI-dihydrodiol) into 3-(2,3-dihydroxylphenyl)propanoic acid (DHPP) and 2,3-dihydroxicinnamic acid (DHCI), respectively. The polypeptide is 3-phenylpropionate-dihydrodiol/cinnamic acid-dihydrodiol dehydrogenase (Escherichia coli O17:K52:H18 (strain UMN026 / ExPEC)).